The chain runs to 157 residues: MSDDNQTKLEAADIQALLAVLPHRYPFLLIDRIVDIDGDVSATGIKNVTINEPHFTGHFPENPIMPGVLIVEAMAQTAGAISLLQRKTGRPGVVYFMTIDNAKFRRPVVPGDRLLLHVKKIKQRANISKYECVAEVDGVKVAEAEVAAMISVADENL.

His58 is a catalytic residue.

It belongs to the thioester dehydratase family. FabZ subfamily.

Its subcellular location is the cytoplasm. The catalysed reaction is a (3R)-hydroxyacyl-[ACP] = a (2E)-enoyl-[ACP] + H2O. Involved in unsaturated fatty acids biosynthesis. Catalyzes the dehydration of short chain beta-hydroxyacyl-ACPs and long chain saturated and unsaturated beta-hydroxyacyl-ACPs. The polypeptide is 3-hydroxyacyl-[acyl-carrier-protein] dehydratase FabZ (Brucella ovis (strain ATCC 25840 / 63/290 / NCTC 10512)).